The sequence spans 188 residues: RNA 2',3'-cyclic phosphodiesterase (188 aa).

Catalysis depends on H42, which acts as the Proton donor. Short sequence motifs (HXTX) lie at residues 42-45 (HMTL) and 130-133 (HVTI). Residue H130 is the Proton acceptor of the active site.

The protein belongs to the 2H phosphoesterase superfamily. ThpR family.

It carries out the reaction a 3'-end 2',3'-cyclophospho-ribonucleotide-RNA + H2O = a 3'-end 2'-phospho-ribonucleotide-RNA + H(+). In terms of biological role, hydrolyzes RNA 2',3'-cyclic phosphodiester to an RNA 2'-phosphomonoester. The sequence is that of RNA 2',3'-cyclic phosphodiesterase from Aquifex aeolicus (strain VF5).